Here is a 401-residue protein sequence, read N- to C-terminus: Deubiquitinase and deneddylase Dub1 (401 aa).

A compositionally biased stretch (polar residues) spans Met-1–Thr-11. The interval Met-1–Leu-24 is disordered. Residues Thr-40–Phe-60 traverse the membrane as a helical segment. Residues Lys-77 to Pro-130 form a disordered region. A compositionally biased stretch (pro residues) spans Val-86 to Pro-128. Residues His-275, Asp-292, and Cys-345 contribute to the active site.

Belongs to the peptidase C48 family. In terms of assembly, binds to host NFKBIA.

Its subcellular location is the secreted. The protein resides in the host cell. The protein localises to the membrane. Functionally, effector proteins function to alter host cell physiology and promote bacterial survival in host tissues. This protease possesses deubiquitinating and deneddylating activities. Impairs ubiquitination and degradation of NF-kappa-B inhibitor alpha (NFKBIA), thereby preventing NF-kappa-B activation. This chain is Deubiquitinase and deneddylase Dub1 (cdu1), found in Chlamydia trachomatis serovar L2 (strain ATCC VR-902B / DSM 19102 / 434/Bu).